The sequence spans 361 residues: Histidinol-phosphate aminotransferase (361 aa).

At K219 the chain carries N6-(pyridoxal phosphate)lysine.

Belongs to the class-II pyridoxal-phosphate-dependent aminotransferase family. Histidinol-phosphate aminotransferase subfamily. Homodimer. Requires pyridoxal 5'-phosphate as cofactor.

It catalyses the reaction L-histidinol phosphate + 2-oxoglutarate = 3-(imidazol-4-yl)-2-oxopropyl phosphate + L-glutamate. Its pathway is amino-acid biosynthesis; L-histidine biosynthesis; L-histidine from 5-phospho-alpha-D-ribose 1-diphosphate: step 7/9. The chain is Histidinol-phosphate aminotransferase from Acinetobacter baumannii (strain ACICU).